Here is a 120-residue protein sequence, read N- to C-terminus: NAD(P)H-quinone oxidoreductase subunit 3 (120 aa).

3 helical membrane passes run 10 to 30 (FLGFLIIAAAVPILALVTNLI), 64 to 84 (MFALVFVIFDVETVFLYPWAV), and 89 to 109 (LGLLAFIEALIFITILVIALA).

This sequence belongs to the complex I subunit 3 family. NDH-1 can be composed of about 15 different subunits; different subcomplexes with different compositions have been identified which probably have different functions.

Its subcellular location is the cellular thylakoid membrane. It carries out the reaction a plastoquinone + NADH + (n+1) H(+)(in) = a plastoquinol + NAD(+) + n H(+)(out). The catalysed reaction is a plastoquinone + NADPH + (n+1) H(+)(in) = a plastoquinol + NADP(+) + n H(+)(out). Its function is as follows. NDH-1 shuttles electrons from an unknown electron donor, via FMN and iron-sulfur (Fe-S) centers, to quinones in the respiratory and/or the photosynthetic chain. The immediate electron acceptor for the enzyme in this species is believed to be plastoquinone. Couples the redox reaction to proton translocation, and thus conserves the redox energy in a proton gradient. Cyanobacterial NDH-1 also plays a role in inorganic carbon-concentration. The sequence is that of NAD(P)H-quinone oxidoreductase subunit 3 from Prochlorococcus marinus subsp. pastoris (strain CCMP1986 / NIES-2087 / MED4).